The following is a 90-amino-acid chain: MTRTVHCRKYKEELPGLDRPPYPGPKGEDIYNNVSRQAWDEWQKHQTMLINERRLNMMNAEDRKFLQAEMEKFLSGEEYAQAEGYVQPKE.

It belongs to the Fe(2+)-trafficking protein family.

Functionally, could be a mediator in iron transactions between iron acquisition and iron-requiring processes, such as synthesis and/or repair of Fe-S clusters in biosynthetic enzymes. This chain is Probable Fe(2+)-trafficking protein, found in Azotobacter vinelandii (strain DJ / ATCC BAA-1303).